Here is a 549-residue protein sequence, read N- to C-terminus: CTP synthase (549 aa).

The amidoligase domain stretch occupies residues 1-272; sequence MPPKSTTTKH…DAYVVRKLDL (272 aa). Ser19 serves as a coordination point for CTP. Position 19 (Ser19) interacts with UTP. ATP-binding positions include 20 to 25 and Asp77; that span reads SLGKGL. Mg(2+) is bound by residues Asp77 and Glu146. Residues 153 to 155, 193 to 198, and Lys229 contribute to the CTP site; these read DIE and KTKPTQ. UTP contacts are provided by residues 193-198 and Lys229; that span reads KTKPTQ. Positions 297-548 constitute a Glutamine amidotransferase type-1 domain; it reads NLALVGKYID…VKAAVERKTG (252 aa). Gly360 lines the L-glutamine pocket. The active-site Nucleophile; for glutamine hydrolysis is Cys387. Residues 388-391, Glu411, and Arg473 contribute to the L-glutamine site; that span reads LGLQ. Residues His521 and Glu523 contribute to the active site.

It belongs to the CTP synthase family. Homotetramer.

The enzyme catalyses UTP + L-glutamine + ATP + H2O = CTP + L-glutamate + ADP + phosphate + 2 H(+). It carries out the reaction L-glutamine + H2O = L-glutamate + NH4(+). The catalysed reaction is UTP + NH4(+) + ATP = CTP + ADP + phosphate + 2 H(+). It functions in the pathway pyrimidine metabolism; CTP biosynthesis via de novo pathway; CTP from UDP: step 2/2. With respect to regulation, allosterically activated by GTP, when glutamine is the substrate; GTP has no effect on the reaction when ammonia is the substrate. The allosteric effector GTP functions by stabilizing the protein conformation that binds the tetrahedral intermediate(s) formed during glutamine hydrolysis. Inhibited by the product CTP, via allosteric rather than competitive inhibition. Its function is as follows. Catalyzes the ATP-dependent amination of UTP to CTP with either L-glutamine or ammonia as the source of nitrogen. Regulates intracellular CTP levels through interactions with the four ribonucleotide triphosphates. This Streptomyces avermitilis (strain ATCC 31267 / DSM 46492 / JCM 5070 / NBRC 14893 / NCIMB 12804 / NRRL 8165 / MA-4680) protein is CTP synthase.